The chain runs to 154 residues: Cyclin-dependent protein kinase inhibitor SMR14 (154 aa).

The disordered stretch occupies residues 1-111 (MSKIKIFHLF…RPPRKPKAIP (111 aa)). Low complexity predominate over residues 24-37 (SLLVPSKSDSLDSS). Basic and acidic residues predominate over residues 74–83 (KWECKDEESP).

Probable cyclin-dependent protein kinase (CDK) inhibitor that functions as a repressor of mitosis in the endoreduplication cell cycle. The sequence is that of Cyclin-dependent protein kinase inhibitor SMR14 from Arabidopsis thaliana (Mouse-ear cress).